The following is a 248-amino-acid chain: 3-deoxy-manno-octulosonate cytidylyltransferase (248 aa).

Belongs to the KdsB family.

The protein localises to the cytoplasm. The enzyme catalyses 3-deoxy-alpha-D-manno-oct-2-ulosonate + CTP = CMP-3-deoxy-beta-D-manno-octulosonate + diphosphate. The protein operates within nucleotide-sugar biosynthesis; CMP-3-deoxy-D-manno-octulosonate biosynthesis; CMP-3-deoxy-D-manno-octulosonate from 3-deoxy-D-manno-octulosonate and CTP: step 1/1. It functions in the pathway bacterial outer membrane biogenesis; lipopolysaccharide biosynthesis. Its function is as follows. Activates KDO (a required 8-carbon sugar) for incorporation into bacterial lipopolysaccharide in Gram-negative bacteria. This chain is 3-deoxy-manno-octulosonate cytidylyltransferase, found in Chlorobaculum parvum (strain DSM 263 / NCIMB 8327) (Chlorobium vibrioforme subsp. thiosulfatophilum).